The sequence spans 388 residues: Acyl-[acyl-carrier-protein] dehydrogenase MbtN (388 aa).

It belongs to the acyl-CoA dehydrogenase family. FAD is required as a cofactor.

It functions in the pathway siderophore biosynthesis; mycobactin biosynthesis. In terms of biological role, catalyzes the dehydrogenation at the alpha-beta position of ACP-bound acyl chains. This results in the introduction of a double bond in the lipidic chain, which is further transferred to the epsilon-amino group of lysine residue in the mycobactin core by MbtK. This Mycolicibacterium paratuberculosis (strain ATCC BAA-968 / K-10) (Mycobacterium paratuberculosis) protein is Acyl-[acyl-carrier-protein] dehydrogenase MbtN (mbtN).